The sequence spans 79 residues: Conotoxin Kt6.1 (79 aa).

The signal sequence occupies residues 1 to 22 (MKLTCVLIISVLFLTASQLITA). Positions 23-47 (VYSRDKQQYRAARLRDEMRNLKGAR) are excised as a propeptide. 3 disulfide bridges follow: cysteine 49/cysteine 62, cysteine 56/cysteine 67, and cysteine 61/cysteine 77. A 4-hydroxyproline mark is found at proline 60 and proline 63.

The protein belongs to the conotoxin O1 superfamily. As to expression, expressed by the venom duct.

The protein localises to the secreted. Its function is as follows. Ion channel inhibitor that inhibits the increase in intracellular calcium upon depolarization in DRG neurons. In vivo, both intraperitoneal and intracranial injections into mice induce hyperactivity. This chain is Conotoxin Kt6.1, found in Conus kintoki (Cone snail).